A 99-amino-acid chain; its full sequence is Small ribosomal subunit protein uS14c (99 aa).

Belongs to the universal ribosomal protein uS14 family. In terms of assembly, part of the 30S ribosomal subunit.

It localises to the plastid. The protein resides in the chloroplast. Functionally, binds 16S rRNA, required for the assembly of 30S particles. This Welwitschia mirabilis (Tree tumbo) protein is Small ribosomal subunit protein uS14c.